The chain runs to 49 residues: Putative DNA-directed RNA polymerase subunit omega (49 aa).

It belongs to the RNA polymerase subunit omega family.

It localises to the plastid. Its subcellular location is the chloroplast. The catalysed reaction is RNA(n) + a ribonucleoside 5'-triphosphate = RNA(n+1) + diphosphate. May be involved in RNA polymerase activity. This Cyanidioschyzon merolae (strain NIES-3377 / 10D) (Unicellular red alga) protein is Putative DNA-directed RNA polymerase subunit omega (rpoZ).